A 180-amino-acid chain; its full sequence is NADH-quinone oxidoreductase subunit I 1 (180 aa).

2 consecutive 4Fe-4S ferredoxin-type domains span residues 50–80 and 90–119; these read LSRD…LQKT and EFFR…LTPD. Cys-60, Cys-63, Cys-66, Cys-70, Cys-99, Cys-102, Cys-105, and Cys-109 together coordinate [4Fe-4S] cluster.

The protein belongs to the complex I 23 kDa subunit family. In terms of assembly, NDH-1 is composed of 14 different subunits. Subunits NuoA, H, J, K, L, M, N constitute the membrane sector of the complex. The cofactor is [4Fe-4S] cluster.

Its subcellular location is the cell inner membrane. It carries out the reaction a quinone + NADH + 5 H(+)(in) = a quinol + NAD(+) + 4 H(+)(out). Functionally, NDH-1 shuttles electrons from NADH, via FMN and iron-sulfur (Fe-S) centers, to quinones in the respiratory chain. The immediate electron acceptor for the enzyme in this species is believed to be ubiquinone. Couples the redox reaction to proton translocation (for every two electrons transferred, four hydrogen ions are translocated across the cytoplasmic membrane), and thus conserves the redox energy in a proton gradient. The chain is NADH-quinone oxidoreductase subunit I 1 from Nitrosococcus oceani (strain ATCC 19707 / BCRC 17464 / JCM 30415 / NCIMB 11848 / C-107).